Here is a 99-residue protein sequence, read N- to C-terminus: PFGAEMCKLVPFIQKASVGITVLSLCALSIDRYRAVASWSRIKGIGIPKWTAVEIVLIWVVSVVLAVPEAIGFDMITMDYKGSYLRICLLHPVQKTAFM.

The Extracellular segment spans residues 1–8 (PFGAEMCK). A disulfide bridge connects residues Cys7 and Cys88. Residues 9–30 (LVPFIQKASVGITVLSLCALSI) traverse the membrane as a helical segment. The Cytoplasmic segment spans residues 31–51 (DRYRAVASWSRIKGIGIPKWT). A helical membrane pass occupies residues 52–76 (AVEIVLIWVVSVVLAVPEAIGFDMI). At 77-99 (TMDYKGSYLRICLLHPVQKTAFM) the chain is on the extracellular side.

Belongs to the G-protein coupled receptor 1 family. Endothelin receptor subfamily. EDNRB sub-subfamily.

The protein resides in the cell membrane. Its function is as follows. Non-specific receptor for endothelin 1, 2, and 3. Mediates its action by association with G proteins that activate a phosphatidylinositol-calcium second messenger system. This Macaca fascicularis (Crab-eating macaque) protein is Endothelin receptor type B (EDNRB).